Reading from the N-terminus, the 397-residue chain is Ribosomal RNA large subunit methyltransferase I (397 aa).

Positions 2–80 (AIRIKLKPGR…KEETIDADFF (79 aa)) constitute a PUA domain.

Belongs to the methyltransferase superfamily. RlmI family.

It localises to the cytoplasm. The enzyme catalyses cytidine(1962) in 23S rRNA + S-adenosyl-L-methionine = 5-methylcytidine(1962) in 23S rRNA + S-adenosyl-L-homocysteine + H(+). Specifically methylates the cytosine at position 1962 (m5C1962) of 23S rRNA. The polypeptide is Ribosomal RNA large subunit methyltransferase I (Shewanella frigidimarina (strain NCIMB 400)).